A 317-amino-acid chain; its full sequence is Probable deoxyhypusine synthase 1 (317 aa).

Lys285 serves as the catalytic Nucleophile.

This sequence belongs to the deoxyhypusine synthase family. NAD(+) is required as a cofactor.

It catalyses the reaction [eIF5A protein]-L-lysine + spermidine = [eIF5A protein]-deoxyhypusine + propane-1,3-diamine. It functions in the pathway protein modification; eIF5A hypusination. Functionally, catalyzes the NAD-dependent oxidative cleavage of spermidine and the subsequent transfer of the butylamine moiety of spermidine to the epsilon-amino group of a specific lysine residue of the eIF-5A precursor protein to form the intermediate deoxyhypusine residue. The polypeptide is Probable deoxyhypusine synthase 1 (dys1) (Methanosarcina mazei (strain ATCC BAA-159 / DSM 3647 / Goe1 / Go1 / JCM 11833 / OCM 88) (Methanosarcina frisia)).